Consider the following 1498-residue polypeptide: Methyl-CpG-binding domain protein 5 (1498 aa).

The 71-residue stretch at 11-81 (DKEGGLAAIQ…KVFNFDPGAA (71 aa)) folds into the MBD domain. The segment at 57 to 68 (DGTCKCGLECPL) is required for interaction with ASXL1/2/3. Disordered regions lie at residues 199 to 274 (PRQR…TPLS), 329 to 350 (HHKP…QKKP), 452 to 521 (RIEA…YKDI), 594 to 642 (LAGN…SGRA), and 1350 to 1377 (NGCV…PSSH). Residues 333–343 (PQGPPPPPPPS) show a composition bias toward pro residues. Composition is skewed to low complexity over residues 499-511 (SPRP…PSTK) and 594-613 (LAGN…SSGN). The span at 614-624 (TEGHSTLNTMF) shows a compositional bias: polar residues. The region spanning 1385-1409 (RTFNVGDLVWGQIKGLTSWPGKFIR) is the PWWP domain. The interval 1473-1498 (SGTVHQIPQGDRQMRPPKPKRRKISR) is disordered. The segment covering 1487-1498 (RPPKPKRRKISR) has biased composition (basic residues).

As to quaternary structure, core component of the polycomb repressive deubiquitinase (PR-DUB) complex, at least composed of BAP1, one of ASXL1, ASXL2 or (probably) ASXL3, and one of MBD5 or MBD6. Distinct combinations of ASXL and MBD proteins may preferentially bind specific histone modification marks. The PR-DUB core associates with a number of accessory proteins, including FOXK1, FOXK2, KDM1B, HCFC1 and OGT; KDM1B specifically associates with ASXL2 PR-DUB complexes. Interacts (via MBD domain) with ASXL1, ASXL2 and ASXL3 (via PHD domain); the interaction is probably direct, mediates association with other PR-DUB complex core components. In terms of tissue distribution, expressed at highest levels in adult testis and Brain. As to expression, expressed at highest levels in the oocyte.

The protein localises to the nucleus. The protein resides in the chromosome. Functionally, non-catalytic component of the polycomb repressive deubiquitinase (PR-DUB) complex, a complex that specifically mediates deubiquitination of histone H2A monoubiquitinated at 'Lys-120' (H2AK119ub1). Important for stability of PR-DUB components and stimulating its ubiquitinase activity. As part of the PR-DUB complex, associates with chromatin enriched in histone marks H3K4me1, H3K4me3, and H3K27Ac, but not in H3K27me3. The PR-DUB complex is an epigenetic regulator of gene expression, including genes involved in cell growth and survivability. MBD5 and MBD6 containing complexes associate with distinct chromatin regions enriched in genes involved in different pathways. Heterochromatin recruitment is not mediated by DNA methylation. The PR-DUB complex is an epigenetic regulator of gene expression, including genes involved in development, cell communication, signaling, cell proliferation and cell viability. The protein is Methyl-CpG-binding domain protein 5 (Mbd5) of Mus musculus (Mouse).